Reading from the N-terminus, the 1251-residue chain is Myosin-1 (1251 aa).

A disordered region spans residues 1–37; that stretch reads MGQSKRPFKNKEEKKSRGFGRSRHDDAGAGGRPQVKK. The span at 9 to 27 shows a compositional bias: basic and acidic residues; the sequence is KNKEEKKSRGFGRSRHDDA. In terms of domain architecture, Myosin motor spans 48–727; that stretch reads IGVSDLTLLS…TLFALEHMRD (680 aa). ATP is bound at residue 141-148; the sequence is GESGAGKT. Serine 369 bears the Phosphoserine mark. Residues 416–498 form an actin-binding region; it reads TIGILDIYGF…PGVFAALNDA (83 aa). 2 IQ domains span residues 731–751 and 752–777; these read HNMA…RTEC and AIRI…QGHK. The TH1 domain occupies 785–980; it reads RRRYSLVGSR…PGEPANSVSK (196 aa). Disordered regions lie at residues 958-1093 and 1135-1227; these read RDDV…SNEL and AKTP…ASIA. A compositionally biased stretch (low complexity) spans 1040 to 1052; that stretch reads VAQSVTAVAAAHA. Pro residues predominate over residues 1061–1073; the sequence is RPPPPPPPTQPPA. In terms of domain architecture, SH3 spans 1074 to 1135; it reads PKKDTAKALY…PEAYLEPIVA (62 aa). Residues 1139-1148 are compositionally biased toward pro residues; the sequence is SLPPPPPSLP. Polar residues-rich tracts occupy residues 1150 to 1161 and 1216 to 1225; these read QSKSAVSNTLPN and ATPSSLSNAS.

Belongs to the TRAFAC class myosin-kinesin ATPase superfamily. Myosin family. Post-translationally, phosphorylation of the TEDS site (Ser-369) is required for the polarization of the actin cytoskeleton. Phosphorylation probably activates the myosin-I ATPase activity.

It localises to the cytoplasm. The protein localises to the cytoskeleton. The protein resides in the actin patch. Functionally, type-I myosin implicated in the organization of the actin cytoskeleton. Required for proper actin cytoskeleton polarization. At the cell cortex, assembles in patch-like structures together with proteins from the actin-polymerizing machinery and promotes actin assembly. Functions as actin nucleation-promoting factor (NPF) for the Arp2/3 complex. The chain is Myosin-1 (MYO1) from Coccidioides immitis (strain RS) (Valley fever fungus).